The sequence spans 413 residues: Enhanced ethylene response protein 5 (413 aa).

The region spanning 216-402 (VTYMYYTGRL…KVVVLSKQDP (187 aa)) is the PCI domain.

As to quaternary structure, interacts with EIN2 (via C-terminus). May also interact weakly with CSN8. Interacts with DSS1(V), AMPD, SAC3A, SAC3B and At5g61290 (AC Q9FLK4). Interacts with UCH1 and UCH2. Interacts with NUP1, anchoring the TREX-2 complex on the nuclear pore complex. Expressed at low levels in roots, leaves, stems and shoots. Detected in seedlings, roots, leaves and anthers.

Its subcellular location is the nucleus. Functionally, involved in the regulation of ethylene response. Probable TREX-2 component required for nuclear RNA export. The TREX-2 complex (transcription and export complex 2) functions in docking export-competent ribonucleoprotein particles (mRNPs) to the nuclear entrance of the nuclear pore complex (nuclear basket). TREX-2 participates in mRNA export and accurate chromatin positioning in the nucleus by tethering genes to the nuclear periphery. This chain is Enhanced ethylene response protein 5, found in Arabidopsis thaliana (Mouse-ear cress).